We begin with the raw amino-acid sequence, 360 residues long: Phenylalanine--tRNA ligase alpha subunit (360 aa).

Position 260 (Glu260) interacts with Mg(2+).

The protein belongs to the class-II aminoacyl-tRNA synthetase family. Phe-tRNA synthetase alpha subunit type 1 subfamily. As to quaternary structure, tetramer of two alpha and two beta subunits. Mg(2+) serves as cofactor.

The protein resides in the cytoplasm. It carries out the reaction tRNA(Phe) + L-phenylalanine + ATP = L-phenylalanyl-tRNA(Phe) + AMP + diphosphate + H(+). This is Phenylalanine--tRNA ligase alpha subunit from Agrobacterium fabrum (strain C58 / ATCC 33970) (Agrobacterium tumefaciens (strain C58)).